We begin with the raw amino-acid sequence, 314 residues long: ATP synthase gamma chain (314 aa).

This sequence belongs to the ATPase gamma chain family. As to quaternary structure, F-type ATPases have 2 components, CF(1) - the catalytic core - and CF(0) - the membrane proton channel. CF(1) has five subunits: alpha(3), beta(3), gamma(1), delta(1), epsilon(1). CF(0) has three main subunits: a, b and c.

The protein resides in the cell membrane. Produces ATP from ADP in the presence of a proton gradient across the membrane. The gamma chain is believed to be important in regulating ATPase activity and the flow of protons through the CF(0) complex. This Lactiplantibacillus plantarum (strain ATCC BAA-793 / NCIMB 8826 / WCFS1) (Lactobacillus plantarum) protein is ATP synthase gamma chain.